The sequence spans 269 residues: Aquaporin-7 (269 aa).

Over 1 to 20 (MAGSVLENIQSVLQKTWVRE) the chain is Cytoplasmic. At S4 the chain carries Phosphoserine. A helical transmembrane segment spans residues 21–38 (FLAEFLSTYVLMVFGLGS). Residues 39–51 (VAHMVLGERLGSY) lie on the Extracellular side of the membrane. The helical transmembrane segment at 52-69 (LGVNLGFGFGVTMGIHVA) threads the bilayer. Residues 70 to 73 (GGIS) lie on the Cytoplasmic side of the membrane. Residues 74–87 (GAHMNAAVTFTNCA) constitute an intramembrane region (discontinuously helical). The short motif at 78 to 80 (NAA) is the NPA 1 element. Topologically, residues 88–95 (LGRMAWKK) are cytoplasmic. The chain crosses the membrane as a helical span at residues 96–116 (FPIYVLGQFLGSFLAAATTYL). The Extracellular segment spans residues 117 to 151 (IFYGAINHYAGGELLVTGPKSTANIFATYLPEHMT). The chain crosses the membrane as a helical span at residues 152 to 172 (LWRGFVDEVFVTGMLQLCIFA). Residues 173–184 (ITDKLNSPALQG) are Cytoplasmic-facing. Residues 185–201 (TEPLMIGILVCVLGVSL) form a helical membrane-spanning segment. The Extracellular segment spans residues 202–205 (GMNT). The discontinuously helical intramembrane region spans 206-219 (GYAINPSRDLPPRF). The NPA 2 motif lies at 210 to 212 (NPS). The Extracellular portion of the chain corresponds to 220–237 (FTFIAGWGKKVFSAGNNW). Residues 238–259 (WWVPVVAPLLGAYLGGIVYLGL) traverse the membrane as a helical segment. The Cytoplasmic segment spans residues 260–269 (IHAGIPPQGS).

Belongs to the MIP/aquaporin (TC 1.A.8) family. Homotetramer; each monomer provides an independent glycerol/water pore. Two homotetramers on opposing membranes can dimerize, forming a cell-cell junction. Interacts with PLIN1. Phosphorylation by PKA could prevent the interaction with PLIN1. Detected in heart, kidney and testis.

The protein localises to the cell membrane. It localises to the cytoplasmic vesicle membrane. The protein resides in the lipid droplet. It carries out the reaction glycerol(in) = glycerol(out). It catalyses the reaction H2O(in) = H2O(out). The catalysed reaction is urea(in) = urea(out). Its activity is regulated as follows. Glycerol transport is regulated by pH, with the porin being permeable to glycerol at pH 7.4 but not at pH 5.5. Water permeability, however, is not influenced by pH. Not inhibited by mercury ions. Aquaglyceroporins form homotetrameric transmembrane channels, with each monomer independently mediating glycerol and water transport across the plasma membrane along their osmotic gradient. Could also be permeable to urea. Mediates the efflux of glycerol, formed upon triglyceride hydrolysis, to avoid its accumulation in adipocytes and to make it available to other tissues. In the kidney, mediates the reabsorption of glycerol, preventing its loss in urine, again participating to energy homeostasis. In pancreatic beta cells, it also mediates the efflux of glycerol, regulating its intracellular levels. In Rattus norvegicus (Rat), this protein is Aquaporin-7.